The sequence spans 137 residues: Large ribosomal subunit protein uL16 (137 aa).

A disordered region spans residues 1–22 (MLQPKRTKFRKQQKGRNRGLAH).

Belongs to the universal ribosomal protein uL16 family. Part of the 50S ribosomal subunit.

In terms of biological role, binds 23S rRNA and is also seen to make contacts with the A and possibly P site tRNAs. The polypeptide is Large ribosomal subunit protein uL16 (Saccharophagus degradans (strain 2-40 / ATCC 43961 / DSM 17024)).